A 435-amino-acid chain; its full sequence is D-amino acid dehydrogenase (435 aa).

Val-3–Trp-17 lines the FAD pocket.

The protein belongs to the DadA oxidoreductase family. The cofactor is FAD.

It carries out the reaction a D-alpha-amino acid + A + H2O = a 2-oxocarboxylate + AH2 + NH4(+). The protein operates within amino-acid degradation; D-alanine degradation; NH(3) and pyruvate from D-alanine: step 1/1. Oxidative deamination of D-amino acids. The sequence is that of D-amino acid dehydrogenase from Xylella fastidiosa (strain 9a5c).